The sequence spans 128 residues: Ribosome-binding factor A (128 aa).

It belongs to the RbfA family. Monomer. Binds 30S ribosomal subunits, but not 50S ribosomal subunits or 70S ribosomes.

The protein resides in the cytoplasm. In terms of biological role, one of several proteins that assist in the late maturation steps of the functional core of the 30S ribosomal subunit. Associates with free 30S ribosomal subunits (but not with 30S subunits that are part of 70S ribosomes or polysomes). Required for efficient processing of 16S rRNA. May interact with the 5'-terminal helix region of 16S rRNA. In Herminiimonas arsenicoxydans, this protein is Ribosome-binding factor A.